The primary structure comprises 110 residues: Insulin (110 aa).

The signal sequence occupies residues 1–24 (MALWMHLLTVLALLALWGPNTGQA). 3 cysteine pairs are disulfide-bonded: Cys31–Cys96, Cys43–Cys109, and Cys95–Cys100. A propeptide spans 57–87 (ELEDPQVEQTELGMGLGAGGLQPLALEMALQ) (c peptide).

This sequence belongs to the insulin family. As to quaternary structure, heterodimer of a B chain and an A chain linked by two disulfide bonds.

It localises to the secreted. Functionally, insulin decreases blood glucose concentration. It increases cell permeability to monosaccharides, amino acids and fatty acids. It accelerates glycolysis, the pentose phosphate cycle, and glycogen synthesis in liver. This chain is Insulin (INS), found in Cavia porcellus (Guinea pig).